Here is a 630-residue protein sequence, read N- to C-terminus: Phosphomethylpyrimidine synthase (630 aa).

Disordered regions lie at residues 1–22 (MADIDSRLDTTQATPIGVTTGP) and 97–120 (AQREVRPEDNGQLGPDRSGGVPAF). Substrate contacts are provided by residues N224, M253, Y282, H318, 338–340 (SRG), 379–382 (DGLR), and E418. H422 contributes to the Zn(2+) binding site. Y445 contributes to the substrate binding site. Residue H486 participates in Zn(2+) binding. [4Fe-4S] cluster contacts are provided by C566, C569, and C574.

It belongs to the ThiC family. As to quaternary structure, homodimer. It depends on [4Fe-4S] cluster as a cofactor.

It carries out the reaction 5-amino-1-(5-phospho-beta-D-ribosyl)imidazole + S-adenosyl-L-methionine = 4-amino-2-methyl-5-(phosphooxymethyl)pyrimidine + CO + 5'-deoxyadenosine + formate + L-methionine + 3 H(+). It participates in cofactor biosynthesis; thiamine diphosphate biosynthesis. In terms of biological role, catalyzes the synthesis of the hydroxymethylpyrimidine phosphate (HMP-P) moiety of thiamine from aminoimidazole ribotide (AIR) in a radical S-adenosyl-L-methionine (SAM)-dependent reaction. This chain is Phosphomethylpyrimidine synthase, found in Sphingopyxis alaskensis (strain DSM 13593 / LMG 18877 / RB2256) (Sphingomonas alaskensis).